A 346-amino-acid chain; its full sequence is Very-long-chain 3-oxoacyl-CoA reductase (346 aa).

A helical transmembrane segment spans residues 26–46 (TASVLLVAGGWFVVSRVWTFL). NADP(+) is bound by residues Ile71, Asp126, Asp134, Asn153, Tyr220, Lys224, Ile253, and Ser255. The active-site Proton donor is Tyr220. The active-site Lowers pKa of active site Tyr is the Lys224.

It belongs to the short-chain dehydrogenases/reductases (SDR) family.

It is found in the endoplasmic reticulum membrane. It catalyses the reaction a very-long-chain (3R)-3-hydroxyacyl-CoA + NADP(+) = a very-long-chain 3-oxoacyl-CoA + NADPH + H(+). It participates in lipid metabolism; fatty acid biosynthesis. In terms of biological role, component of the microsomal membrane bound fatty acid elongation system, which produces the 26-carbon very long-chain fatty acids (VLCFA) from palmitate. Catalyzes the reduction of the 3-ketoacyl-CoA intermediate that is formed in each cycle of fatty acid elongation. VLCFAs serve as precursors for ceramide and sphingolipids. This is Very-long-chain 3-oxoacyl-CoA reductase from Emericella nidulans (strain FGSC A4 / ATCC 38163 / CBS 112.46 / NRRL 194 / M139) (Aspergillus nidulans).